Here is a 282-residue protein sequence, read N- to C-terminus: Large ribosomal subunit protein uL2c (282 aa).

The interval 230–261 (SAQNAVDHPHGGGEGKAPIGRIPSTPWGKPAL) is disordered.

The protein belongs to the universal ribosomal protein uL2 family. As to quaternary structure, part of the 50S ribosomal subunit.

Its subcellular location is the plastid. This Helicosporidium sp. subsp. Simulium jonesii (Green alga) protein is Large ribosomal subunit protein uL2c (rpl2).